Consider the following 67-residue polypeptide: Coiled-coil domain-containing protein 179 (67 aa).

Disordered regions lie at residues 1–32 (MCLR…RQSV) and 47–67 (RKLG…ILWT). Positions 27 to 53 (STRQSVEKRINYMQNLQKEKRKLGKRF) form a coiled coil.

The chain is Coiled-coil domain-containing protein 179 (Ccdc179) from Mus musculus (Mouse).